The sequence spans 106 residues: Nucleoid-associated protein Nwi_0368 (106 aa).

This sequence belongs to the YbaB/EbfC family. Homodimer.

It localises to the cytoplasm. Its subcellular location is the nucleoid. Functionally, binds to DNA and alters its conformation. May be involved in regulation of gene expression, nucleoid organization and DNA protection. In Nitrobacter winogradskyi (strain ATCC 25391 / DSM 10237 / CIP 104748 / NCIMB 11846 / Nb-255), this protein is Nucleoid-associated protein Nwi_0368.